Here is a 910-residue protein sequence, read N- to C-terminus: Protein translocase subunit SecA (910 aa).

ATP contacts are provided by residues glutamine 86, 104–108 (GEGKT), and aspartate 508. Cysteine 894, cysteine 896, cysteine 905, and cysteine 906 together coordinate Zn(2+).

The protein belongs to the SecA family. In terms of assembly, monomer and homodimer. Part of the essential Sec protein translocation apparatus which comprises SecA, SecYEG and auxiliary proteins SecDF. Other proteins may also be involved. It depends on Zn(2+) as a cofactor.

The protein localises to the cell membrane. It localises to the cytoplasm. The catalysed reaction is ATP + H2O + cellular proteinSide 1 = ADP + phosphate + cellular proteinSide 2.. Its function is as follows. Part of the Sec protein translocase complex. Interacts with the SecYEG preprotein conducting channel. Has a central role in coupling the hydrolysis of ATP to the transfer of proteins into and across the cell membrane, serving as an ATP-driven molecular motor driving the stepwise translocation of polypeptide chains across the membrane. This chain is Protein translocase subunit SecA, found in Acetivibrio thermocellus (strain ATCC 27405 / DSM 1237 / JCM 9322 / NBRC 103400 / NCIMB 10682 / NRRL B-4536 / VPI 7372) (Clostridium thermocellum).